A 76-amino-acid chain; its full sequence is Frizzled-3 (76 aa).

The Cytoplasmic segment spans residues 1–5 (YPERP). The chain crosses the membrane as a helical span at residues 6-26 (IIFYAVCYMMVSLIFFIGFLL). Over 27 to 54 (EDRVACNASSPAQYKASTVTQGSHNKAC) the chain is Extracellular. The N-linked (GlcNAc...) asparagine glycan is linked to Asn-33. Residues 55-75 (TMLFMVLYFFTMAGSVWWVIL) traverse the membrane as a helical segment. Position 76 (Arg-76) is a topological domain, cytoplasmic.

This sequence belongs to the G-protein coupled receptor Fz/Smo family.

Its subcellular location is the membrane. It localises to the cell membrane. The protein localises to the cell surface. It is found in the apical cell membrane. Functionally, receptor for Wnt proteins. Most of frizzled receptors are coupled to the beta-catenin canonical signaling pathway, which leads to the activation of disheveled proteins, inhibition of GSK-3 kinase, nuclear accumulation of beta-catenin and activation of Wnt target genes. A second signaling pathway involving PKC and calcium fluxes has been seen for some family members, but it is not yet clear if it represents a distinct pathway or if it can be integrated in the canonical pathway, as PKC seems to be required for Wnt-mediated inactivation of GSK-3 kinase. Both pathways seem to involve interactions with G-proteins. May be involved in transduction and intercellular transmission of polarity information during tissue morphogenesis and/or in differentiated tissues. Plays a role in controlling early axon growth and guidance processes necessary for the formation of a subset of central and peripheral major fiber tracts. Involved in the migration of cranial neural crest cells. May also be implicated in the transmission of sensory information from the trunk and limbs to the brain. Controls commissural sensory axons guidance after midline crossing along the anterior-posterior axis in the developing spinal cord in a Wnt-dependent signaling pathway. Together with FZD6, is involved in the neural tube closure and plays a role in the regulation of the establishment of planar cell polarity (PCP). Promotes neurogenesis by maintaining sympathetic neuroblasts within the cell cycle in a beta-catenin-dependent manner. The chain is Frizzled-3 (FZD3) from Gallus gallus (Chicken).